Here is a 177-residue protein sequence, read N- to C-terminus: Isopentenyl-diphosphate Delta-isomerase 2 (177 aa).

Residues histidine 24 and histidine 30 each contribute to the Mn(2+) site. Residues 28–160 enclose the Nudix hydrolase domain; sequence MLHRAFSIFV…PDVYTVWFKK (133 aa). Residue cysteine 65 is part of the active site. A Mg(2+)-binding site is contributed by cysteine 65. Histidine 67 contacts Mn(2+). Glutamate 85 lines the Mg(2+) pocket. 2 residues coordinate Mn(2+): glutamate 110 and glutamate 112. Residue glutamate 112 is part of the active site.

This sequence belongs to the IPP isomerase type 1 family. As to quaternary structure, homodimer. Mg(2+) serves as cofactor. Requires Mn(2+) as cofactor.

The protein localises to the cytoplasm. The catalysed reaction is isopentenyl diphosphate = dimethylallyl diphosphate. It functions in the pathway isoprenoid biosynthesis; dimethylallyl diphosphate biosynthesis; dimethylallyl diphosphate from isopentenyl diphosphate: step 1/1. Catalyzes the 1,3-allylic rearrangement of the homoallylic substrate isopentenyl (IPP) to its highly electrophilic allylic isomer, dimethylallyl diphosphate (DMAPP). This chain is Isopentenyl-diphosphate Delta-isomerase 2, found in Photorhabdus laumondii subsp. laumondii (strain DSM 15139 / CIP 105565 / TT01) (Photorhabdus luminescens subsp. laumondii).